The sequence spans 323 residues: Aldo-keto reductase family 1 member C13 (323 aa).

Residues 20-24 (GFGTY), D50, and Y55 each bind NAD(+). Y55 (proton donor) is an active-site residue. Position 117 (H117) interacts with substrate. NAD(+)-binding positions include 166–167 (SN), Q190, 216–224 (YGALGTQRY), and 270–280 (QSFKENEMREN).

This sequence belongs to the aldo/keto reductase family.

In terms of biological role, catalyzes the dehydrogenation of 17-beta-hydroxysteroids. May also exhibit significant activity with a variety of cyclic and alicyclic alcohols. Uses both NAD and NADP, but the activity is much greater with NAD than with NADP. The protein is Aldo-keto reductase family 1 member C13 (Akr1c13) of Mus musculus (Mouse).